We begin with the raw amino-acid sequence, 422 residues long: MALVLHAGKTNKNAFKTLIVAEYTGVKVELAPDFEMGVTNKTPEYLKLNPIGKVPLLETPDGPIFESNAIARYVARLKADNPLIGSSLIDYAHIEQWIDFGSLEIDANIISWFRPRFGYAVYLPPAEEAAISALKRALGALNTHLASNTYLVGHFVTLADIIVTCNLFFGFTKLMIKSFTSEFPHVERYFWTLVNQPKFKKVLGDVKQTESVPPVPSAKKPSQPKETKSKAKEEPKKEAKKEPAKPKAEAAEEVEEAPKPKPKNPLDLLPPSNMVLDDWKRLYSNTKTNFREVAIKGFWDMYDPEGYSLWFCEYKYNDENTVSFVTLNKVGGFLQRMDLARKYAFGKMLVIGSEPPFKVKGLWLFRGQEIPPFVMEECYDMELYNWTKVDLSDENQKERVNQVIEDQEPFEGEALLDAKCFK.

Residues 1–82 enclose the GST N-terminal domain; that stretch reads MALVLHAGKT…YVARLKADNP (82 aa). Residues 87–215 enclose the GST C-terminal domain; the sequence is SLIDYAHIEQ…VKQTESVPPV (129 aa). The tract at residues 210 to 269 is disordered; sequence ESVPPVPSAKKPSQPKETKSKAKEEPKKEAKKEPAKPKAEAAEEVEEAPKPKPKNPLDLL. Over residues 223–250 the composition is skewed to basic and acidic residues; it reads QPKETKSKAKEEPKKEAKKEPAKPKAEA. The region spanning 262–422 is the EF-1-gamma C-terminal domain; it reads PKNPLDLLPP…EALLDAKCFK (161 aa).

EF-1 is composed of four subunits: alpha, beta, delta, and gamma.

Functionally, probably plays a role in anchoring the complex to other cellular components. In Prunus avium (Cherry), this protein is Elongation factor 1-gamma.